The sequence spans 383 residues: Chromatin structure-remodeling complex subunit SFH1 (383 aa).

A disordered region spans residues 61–80 (DDDEKVHSDNGKGEGEEVGH). A compositionally biased stretch (basic and acidic residues) spans 64–80 (EKVHSDNGKGEGEEVGH).

It belongs to the SNF5 family.

It localises to the nucleus. In terms of biological role, part of the chromatin structure-remodeling complex (RSC) which is involved in transcription regulation and nucleosome positioning. RSC is responsible for the transfer of a histone octamer from a nucleosome core particle to naked DNA. The reaction requires ATP and involves an activated RSC-nucleosome intermediate. Remodeling reaction also involves DNA translocation, DNA twist and conformational change. As a reconfigurer of centromeric and flanking nucleosomes, RSC complex is required both for proper kinetochore function in chromosome segregation and, via a PKC1-dependent signaling pathway, for organization of the cellular cytoskeleton. This subunit is essential for mitotic growth and required for cell cycle progression. The sequence is that of Chromatin structure-remodeling complex subunit SFH1 (SFH1) from Eremothecium gossypii (strain ATCC 10895 / CBS 109.51 / FGSC 9923 / NRRL Y-1056) (Yeast).